The primary structure comprises 322 residues: 4-hydroxythreonine-4-phosphate dehydrogenase (322 aa).

Threonine 132 contributes to the substrate binding site. Residues histidine 160, histidine 205, and histidine 260 each contribute to the a divalent metal cation site. 3 residues coordinate substrate: lysine 268, asparagine 277, and arginine 286.

This sequence belongs to the PdxA family. Homodimer. It depends on Zn(2+) as a cofactor. Mg(2+) is required as a cofactor. The cofactor is Co(2+).

It localises to the cytoplasm. The catalysed reaction is 4-(phosphooxy)-L-threonine + NAD(+) = 3-amino-2-oxopropyl phosphate + CO2 + NADH. It functions in the pathway cofactor biosynthesis; pyridoxine 5'-phosphate biosynthesis; pyridoxine 5'-phosphate from D-erythrose 4-phosphate: step 4/5. Catalyzes the NAD(P)-dependent oxidation of 4-(phosphooxy)-L-threonine (HTP) into 2-amino-3-oxo-4-(phosphooxy)butyric acid which spontaneously decarboxylates to form 3-amino-2-oxopropyl phosphate (AHAP). This is 4-hydroxythreonine-4-phosphate dehydrogenase from Xanthomonas campestris pv. campestris (strain 8004).